The sequence spans 646 residues: RNA-binding protein RMD9, mitochondrial (646 aa).

A mitochondrion-targeting transit peptide spans 1–14; that stretch reads MMLRRNAVRSLKTM. Positions 15–51 are cleaved as a propeptide — removed in mature form; the sequence is EISVSNVVNSGSIAMLRGKLANVVLSDRTYHSSPIFH. Residues 209–238 form a PPR1 repeat; that stretch reads VSGYGATHLLTSFKELSFDDDCIRIWEASK. Residues 251–282 form a PPR2 repeat; that stretch reads EPKVVGFMLPLLYAKTRSLTEPNELYNQIIQS. A PPR3 repeat occupies 288–317; that stretch reads PNLYSGLIKVFIKAEDYEKALSLFGQLCEK. One copy of the PPR4 repeat lies at 323-353; it reads YGYLIETHLSFIGDSKNLTLAESFFDKIIND. The stretch at 363–394 is one PPR5 repeat; that stretch reads VSTVNSFLQNIWKAQNDFDHVYRIWEKAVKFY. The PPR6 repeat unit spans residues 401–439; sequence GILSSLNNTFFTIFFENYINDNINGFRKLQEIITFYSGV. The stretch at 444–473 is one PPR7 repeat; sequence EPFFNVMLTRASIWHERSIIDFIDKNYTLY. One copy of the PPR8 repeat lies at 481-514; sequence SYRILLKSLGSIDNTNNEEILDRWLELVKKLNEL.

It belongs to the RMD9 family. Monomer. Phosphorylated. Phosphorylation promotes binding to RNA.

It localises to the mitochondrion inner membrane. Its function is as follows. Binds the RNA motif 5'-AAUAA[U/C]AUUCUU-3' in the 3'-UTR of mitochondrial mRNAs. Involved in the processing or stability of mitochondrial mRNAs. This is RNA-binding protein RMD9, mitochondrial from Saccharomyces cerevisiae (strain ATCC 204508 / S288c) (Baker's yeast).